Consider the following 269-residue polypeptide: 4-hydroxy-tetrahydrodipicolinate reductase (269 aa).

Residues 8–13 (GAAGRM) and E34 contribute to the NAD(+) site. Residue R35 coordinates NADP(+). Residues 98-100 (GTT) and 122-125 (APNY) each bind NAD(+). The active-site Proton donor/acceptor is H155. H156 contributes to the (S)-2,3,4,5-tetrahydrodipicolinate binding site. K159 acts as the Proton donor in catalysis. Residue 165–166 (GT) coordinates (S)-2,3,4,5-tetrahydrodipicolinate.

The protein belongs to the DapB family.

It localises to the cytoplasm. It carries out the reaction (S)-2,3,4,5-tetrahydrodipicolinate + NAD(+) + H2O = (2S,4S)-4-hydroxy-2,3,4,5-tetrahydrodipicolinate + NADH + H(+). The catalysed reaction is (S)-2,3,4,5-tetrahydrodipicolinate + NADP(+) + H2O = (2S,4S)-4-hydroxy-2,3,4,5-tetrahydrodipicolinate + NADPH + H(+). The protein operates within amino-acid biosynthesis; L-lysine biosynthesis via DAP pathway; (S)-tetrahydrodipicolinate from L-aspartate: step 4/4. In terms of biological role, catalyzes the conversion of 4-hydroxy-tetrahydrodipicolinate (HTPA) to tetrahydrodipicolinate. This is 4-hydroxy-tetrahydrodipicolinate reductase from Vibrio vulnificus (strain YJ016).